The sequence spans 335 residues: Aliphatic sulfonates import ATP-binding protein SsuB (335 aa).

The disordered stretch occupies residues 29–61 (DGDAQDAAVYERDGGAHAPPFASGGAPPDGDRA). The ABC transporter domain occupies 74 to 293 (VRLTRVSKRY…ARASAAFAAL (220 aa)). Residue 106 to 113 (GRSGCGKS) coordinates ATP. Positions 308–335 (APAAPNAAGPEGASRGRAAPASGLRWAV) are disordered.

This sequence belongs to the ABC transporter superfamily. Aliphatic sulfonates importer (TC 3.A.1.17.2) family. In terms of assembly, the complex is composed of two ATP-binding proteins (SsuB), two transmembrane proteins (SsuC) and a solute-binding protein (SsuA).

Its subcellular location is the cell inner membrane. The catalysed reaction is ATP + H2O + aliphatic sulfonate-[sulfonate-binding protein]Side 1 = ADP + phosphate + aliphatic sulfonateSide 2 + [sulfonate-binding protein]Side 1.. Part of the ABC transporter complex SsuABC involved in aliphatic sulfonates import. Responsible for energy coupling to the transport system. The sequence is that of Aliphatic sulfonates import ATP-binding protein SsuB from Burkholderia pseudomallei (strain 1710b).